The sequence spans 157 residues: Eukaryotic translation initiation factor 5A-2 (157 aa).

At Ser-2 the chain carries N-acetylserine. Ser-2 carries the post-translational modification Phosphoserine. Thr-7 carries the post-translational modification Phosphothreonine. Position 51 is a hypusine (Lys-51). The residue at position 74 (Ser-74) is a Phosphoserine. A Glycyl lysine isopeptide (Lys-Gly) (interchain with G-Cter in ubiquitin) cross-link involves residue Lys-86.

The protein belongs to the eIF-5A family. In terms of assembly, homodimer. Binds to 80S ribosomes. Actively translating ribosomes show mutually exclusive binding of eIF5a (HYP2 or ANB1) and EFT1/eEF2. Interacts with DYS1 and LIA1. Lys-51 undergoes hypusination, a unique post-translational modification that consists in the addition of a butylamino group from spermidine to lysine side chain, leading to the formation of the unusual amino acid hypusine. eIF-5As are the only known proteins to undergo this modification, which is essential for their function.

Its subcellular location is the cytoplasm. Translation factor that promotes translation elongation and termination, particularly upon ribosome stalling at specific amino acid sequence contexts. Binds between the exit (E) and peptidyl (P) site of the ribosome and promotes rescue of stalled ribosome: specifically required for efficient translation of polyproline-containing peptides as well as other motifs that stall the ribosome. Acts as ribosome quality control (RQC) cofactor by joining the RQC complex to facilitate peptidyl transfer during CAT tailing step. Involved in actin dynamics and cell cycle progression, mRNA decay and probably in a pathway involved in stress response and maintenance of cell wall integrity. This is Eukaryotic translation initiation factor 5A-2 (ANB1) from Saccharomyces cerevisiae (strain ATCC 204508 / S288c) (Baker's yeast).